Consider the following 893-residue polypeptide: TBC domain-containing protein kinase-like protein (893 aa).

In terms of domain architecture, Protein kinase spans Met-1 to Phe-273. The region spanning Asp-466 to Asn-651 is the Rab-GAP TBC domain. Residues Tyr-710–Ser-749 form a disordered region. The span at Ser-720–Ser-729 shows a compositional bias: low complexity. The region spanning Ser-790–Pro-889 is the Rhodanese domain.

The protein belongs to the protein kinase superfamily. Component of the FERRY complex composed of five subunits, TBCK, PPP1R21, FERRY3, CRYZL1 and GATD1 with a ratio of 1:2:1:2:4, respectively.

The protein resides in the cytoplasm. It localises to the cytoskeleton. The protein localises to the spindle. Its subcellular location is the midbody. It is found in the early endosome. Functionally, component of the FERRY complex (Five-subunit Endosomal Rab5 and RNA/ribosome intermediary). The FERRY complex directly interacts with mRNAs and RAB5A, and functions as a RAB5A effector involved in the localization and the distribution of specific mRNAs most likely by mediating their endosomal transport. The complex recruits mRNAs and ribosomes to early endosomes through direct mRNA-interaction. Also involved in the modulation of mTOR signaling and expression of mTOR complex components. Involved in the control of actin-cytoskeleton organization. This Homo sapiens (Human) protein is TBC domain-containing protein kinase-like protein.